We begin with the raw amino-acid sequence, 77 residues long: Conotoxin G11.1 (77 aa).

A signal peptide spans M1–A20. Residues E21–R45 constitute a propeptide that is removed on maturation. 4 cysteine pairs are disulfide-bonded: C46-C60, C53-C65, C59-C69, and C64-C76.

The protein belongs to the conotoxin I3 superfamily. In terms of tissue distribution, expressed by the venom duct.

The protein resides in the secreted. May embed in the membrane and bind to the voltage sensor domain of a ion channel. Does not induce paralysis when injected in fish, leading to the hypothesis that it may be part of the sedative nirvana cabal. This chain is Conotoxin G11.1, found in Conus geographus (Geography cone).